A 421-amino-acid polypeptide reads, in one-letter code: Elongation factor 1-alpha (421 aa).

Residues asparagine 4–threonine 220 enclose the tr-type G domain. Positions glycine 13–serine 20 are G1. Glycine 13–serine 20 is a GTP binding site. Serine 20 is a binding site for Mg(2+). Positions glycine 69 to aspartate 73 are G2. Residues aspartate 90–glycine 93 are G3. GTP contacts are provided by residues aspartate 90 to histidine 94 and asparagine 145 to aspartate 148. The segment at asparagine 145–aspartate 148 is G4. Positions serine 184–phenylalanine 186 are G5.

It belongs to the TRAFAC class translation factor GTPase superfamily. Classic translation factor GTPase family. EF-Tu/EF-1A subfamily.

The protein localises to the cytoplasm. It catalyses the reaction GTP + H2O = GDP + phosphate + H(+). Functionally, GTP hydrolase that promotes the GTP-dependent binding of aminoacyl-tRNA to the A-site of ribosomes during protein biosynthesis. This Halobacterium salinarum (strain ATCC 700922 / JCM 11081 / NRC-1) (Halobacterium halobium) protein is Elongation factor 1-alpha.